Reading from the N-terminus, the 370-residue chain is Cobalt-precorrin-5B C(1)-methyltransferase (370 aa).

Belongs to the CbiD family.

The enzyme catalyses Co-precorrin-5B + S-adenosyl-L-methionine = Co-precorrin-6A + S-adenosyl-L-homocysteine. The protein operates within cofactor biosynthesis; adenosylcobalamin biosynthesis; cob(II)yrinate a,c-diamide from sirohydrochlorin (anaerobic route): step 6/10. Catalyzes the methylation of C-1 in cobalt-precorrin-5B to form cobalt-precorrin-6A. The polypeptide is Cobalt-precorrin-5B C(1)-methyltransferase (Trichormus variabilis (strain ATCC 29413 / PCC 7937) (Anabaena variabilis)).